Consider the following 332-residue polypeptide: MEYLNIIFLQTYKILFLLVPVLVSVAMIVWLDRRIWAFVQKRQGPNVVGPFGLLQSLADALKYIFKEVIIPSSSNKVIFILAPIVTMTLALVSWAVIPFSTTQVLADINVGVLYLFAVSSLGVYGIIMGGWASNSKYPFLGAIRSAAQMVSYEVSIGVIIINVLLCVGSLNLNDIIMAQENLWFIIPLFPMFVIFFISALAETNRPPFDLPEAEAELVAGYQTEYSGMMYAMFWLGEYANILLMCAMGSILFLGGWLSPIDLYPFNLIPGAIWMIFKILFLFVLFALVKAVVPRYRYDQLMRLGWKIFLPLSLTWVVLTASYLFYFNLLPVN.

A run of 8 helical transmembrane segments spans residues 11–31 (TYKILFLLVPVLVSVAMIVWL), 77–97 (VIFILAPIVTMTLALVSWAVI), 110–130 (VGVLYLFAVSSLGVYGIIMGG), 156–176 (IGVIIINVLLCVGSLNLNDII), 182–202 (LWFIIPLFPMFVIFFISALAE), 240–260 (NILLMCAMGSILFLGGWLSPI), 268–288 (IPGAIWMIFKILFLFVLFALV), and 307–327 (IFLPLSLTWVVLTASYLFYFN).

It belongs to the complex I subunit 1 family. As to quaternary structure, NDH-1 is composed of 14 different subunits. Subunits NuoA, H, J, K, L, M, N constitute the membrane sector of the complex.

Its subcellular location is the cell inner membrane. The enzyme catalyses a quinone + NADH + 5 H(+)(in) = a quinol + NAD(+) + 4 H(+)(out). In terms of biological role, NDH-1 shuttles electrons from NADH, via FMN and iron-sulfur (Fe-S) centers, to quinones in the respiratory chain. The immediate electron acceptor for the enzyme in this species is believed to be ubiquinone. Couples the redox reaction to proton translocation (for every two electrons transferred, four hydrogen ions are translocated across the cytoplasmic membrane), and thus conserves the redox energy in a proton gradient. This subunit may bind ubiquinone. The protein is NADH-quinone oxidoreductase subunit H of Pelagibacter ubique (strain HTCC1062).